The primary structure comprises 218 residues: Methylthioribulose-1-phosphate dehydratase (218 aa).

Zn(2+)-binding residues include histidine 107 and histidine 109.

This sequence belongs to the aldolase class II family. MtnB subfamily. Zn(2+) serves as cofactor.

It carries out the reaction 5-(methylsulfanyl)-D-ribulose 1-phosphate = 5-methylsulfanyl-2,3-dioxopentyl phosphate + H2O. Its pathway is amino-acid biosynthesis; L-methionine biosynthesis via salvage pathway; L-methionine from S-methyl-5-thio-alpha-D-ribose 1-phosphate: step 2/6. Catalyzes the dehydration of methylthioribulose-1-phosphate (MTRu-1-P) into 2,3-diketo-5-methylthiopentyl-1-phosphate (DK-MTP-1-P). This is Methylthioribulose-1-phosphate dehydratase from Xylella fastidiosa (strain M12).